Here is a 346-residue protein sequence, read N- to C-terminus: Phosphate acyltransferase (346 aa).

This sequence belongs to the PlsX family. As to quaternary structure, homodimer. Probably interacts with PlsY.

It localises to the cytoplasm. The catalysed reaction is a fatty acyl-[ACP] + phosphate = an acyl phosphate + holo-[ACP]. It participates in lipid metabolism; phospholipid metabolism. In terms of biological role, catalyzes the reversible formation of acyl-phosphate (acyl-PO(4)) from acyl-[acyl-carrier-protein] (acyl-ACP). This enzyme utilizes acyl-ACP as fatty acyl donor, but not acyl-CoA. This is Phosphate acyltransferase from Crocosphaera subtropica (strain ATCC 51142 / BH68) (Cyanothece sp. (strain ATCC 51142)).